A 452-amino-acid polypeptide reads, in one-letter code: tRNA modification GTPase MnmE (452 aa).

(6S)-5-formyl-5,6,7,8-tetrahydrofolate is bound by residues R21, E78, and K118. Residues 214 to 375 (GMKVVIAGRP…LREHLKQAMG (162 aa)) form the TrmE-type G domain. N224 is a binding site for K(+). GTP is bound by residues 224 to 229 (NAGKSS), 243 to 249 (TDIAGTT), and 268 to 271 (DTAG). Residue S228 coordinates Mg(2+). K(+) is bound by residues T243, I245, and T248. T249 provides a ligand contact to Mg(2+). K452 is a binding site for (6S)-5-formyl-5,6,7,8-tetrahydrofolate.

It belongs to the TRAFAC class TrmE-Era-EngA-EngB-Septin-like GTPase superfamily. TrmE GTPase family. As to quaternary structure, homodimer. Heterotetramer of two MnmE and two MnmG subunits. It depends on K(+) as a cofactor.

It localises to the cytoplasm. Functionally, exhibits a very high intrinsic GTPase hydrolysis rate. Involved in the addition of a carboxymethylaminomethyl (cmnm) group at the wobble position (U34) of certain tRNAs, forming tRNA-cmnm(5)s(2)U34. The protein is tRNA modification GTPase MnmE of Haemophilus influenzae (strain PittGG).